Reading from the N-terminus, the 469-residue chain is 3-isopropylmalate dehydratase large subunit (469 aa).

Residues Cys-349, Cys-410, and Cys-413 each contribute to the [4Fe-4S] cluster site.

Belongs to the aconitase/IPM isomerase family. LeuC type 1 subfamily. As to quaternary structure, heterodimer of LeuC and LeuD. The cofactor is [4Fe-4S] cluster.

It catalyses the reaction (2R,3S)-3-isopropylmalate = (2S)-2-isopropylmalate. It participates in amino-acid biosynthesis; L-leucine biosynthesis; L-leucine from 3-methyl-2-oxobutanoate: step 2/4. Its function is as follows. Catalyzes the isomerization between 2-isopropylmalate and 3-isopropylmalate, via the formation of 2-isopropylmaleate. The protein is 3-isopropylmalate dehydratase large subunit of Neisseria meningitidis serogroup B (strain ATCC BAA-335 / MC58).